The primary structure comprises 147 residues: SsrA-binding protein (147 aa).

The disordered stretch occupies residues 124-147; that stretch reads KKHDKRQDIKDRDWARKQARQDFS. A compositionally biased stretch (basic and acidic residues) spans 128-147; sequence KRQDIKDRDWARKQARQDFS.

Belongs to the SmpB family.

The protein localises to the cytoplasm. Functionally, required for rescue of stalled ribosomes mediated by trans-translation. Binds to transfer-messenger RNA (tmRNA), required for stable association of tmRNA with ribosomes. tmRNA and SmpB together mimic tRNA shape, replacing the anticodon stem-loop with SmpB. tmRNA is encoded by the ssrA gene; the 2 termini fold to resemble tRNA(Ala) and it encodes a 'tag peptide', a short internal open reading frame. During trans-translation Ala-aminoacylated tmRNA acts like a tRNA, entering the A-site of stalled ribosomes, displacing the stalled mRNA. The ribosome then switches to translate the ORF on the tmRNA; the nascent peptide is terminated with the 'tag peptide' encoded by the tmRNA and targeted for degradation. The ribosome is freed to recommence translation, which seems to be the essential function of trans-translation. The polypeptide is SsrA-binding protein (Neorickettsia sennetsu (strain ATCC VR-367 / Miyayama) (Ehrlichia sennetsu)).